A 301-amino-acid polypeptide reads, in one-letter code: Phosphatidylserine decarboxylase proenzyme (301 aa).

Catalysis depends on charge relay system; for autoendoproteolytic cleavage activity residues D117, H173, and S260. S260 (schiff-base intermediate with substrate; via pyruvic acid; for decarboxylase activity) is an active-site residue. S260 is modified (pyruvic acid (Ser); by autocatalysis).

It belongs to the phosphatidylserine decarboxylase family. PSD-B subfamily. Prokaryotic type II sub-subfamily. In terms of assembly, heterodimer of a large membrane-associated beta subunit and a small pyruvoyl-containing alpha subunit. The cofactor is pyruvate. Is synthesized initially as an inactive proenzyme. Formation of the active enzyme involves a self-maturation process in which the active site pyruvoyl group is generated from an internal serine residue via an autocatalytic post-translational modification. Two non-identical subunits are generated from the proenzyme in this reaction, and the pyruvate is formed at the N-terminus of the alpha chain, which is derived from the carboxyl end of the proenzyme. The autoendoproteolytic cleavage occurs by a canonical serine protease mechanism, in which the side chain hydroxyl group of the serine supplies its oxygen atom to form the C-terminus of the beta chain, while the remainder of the serine residue undergoes an oxidative deamination to produce ammonia and the pyruvoyl prosthetic group on the alpha chain. During this reaction, the Ser that is part of the protease active site of the proenzyme becomes the pyruvoyl prosthetic group, which constitutes an essential element of the active site of the mature decarboxylase.

Its subcellular location is the cell membrane. It carries out the reaction a 1,2-diacyl-sn-glycero-3-phospho-L-serine + H(+) = a 1,2-diacyl-sn-glycero-3-phosphoethanolamine + CO2. It functions in the pathway phospholipid metabolism; phosphatidylethanolamine biosynthesis; phosphatidylethanolamine from CDP-diacylglycerol: step 2/2. Its function is as follows. Catalyzes the formation of phosphatidylethanolamine (PtdEtn) from phosphatidylserine (PtdSer). In Chlamydia trachomatis serovar L2b (strain UCH-1/proctitis), this protein is Phosphatidylserine decarboxylase proenzyme.